The following is a 180-amino-acid chain: Oligoribonuclease (180 aa).

Residues 7–170 (LIWIDLEMTG…DDIRESIAEL (164 aa)) form the Exonuclease domain. The active site involves Y128.

This sequence belongs to the oligoribonuclease family.

The protein resides in the cytoplasm. In terms of biological role, 3'-to-5' exoribonuclease specific for small oligoribonucleotides. The chain is Oligoribonuclease from Pseudomonas fluorescens (strain ATCC BAA-477 / NRRL B-23932 / Pf-5).